Reading from the N-terminus, the 31-residue chain is Scolopendra 20566.01 Da toxin (31 aa).

It belongs to the CRISP family. Venom allergen 5-like subfamily. Contains 3 disulfide bonds. In terms of tissue distribution, expressed by the venom gland.

The protein localises to the secreted. The chain is Scolopendra 20566.01 Da toxin from Scolopendra angulata (Barbados giant red centipede).